A 36-amino-acid polypeptide reads, in one-letter code: Peruvianin-1 (36 aa).

Belongs to the germin family. Homohexamer, possibly consisting of a trimer of dimers. Post-translationally, glycosylated.

Inhibited by iodoacetamide and trans-epoxysuccinyl-L-leucylamido(4-guanidino)butane (E-64) but not by phenylmethylsulfonyl fluoride (PMSF), pepstatin-A, ethylenediamine tetra acetic acid (EDTA) or ethylene glycol tetraacetic acid (EGTA). In terms of biological role, cysteine protease able to degrade azocasein and benzoyl-arginine-beta-naphtylamide (BANA) in vitro. This chain is Peruvianin-1, found in Thevetia peruviana (Yellow oleander).